Consider the following 190-residue polypeptide: Probable molybdenum cofactor guanylyltransferase (190 aa).

Residues 9 to 11 (LCG), Lys-21, Asp-65, and Asp-94 each bind GTP. Asp-94 lines the Mg(2+) pocket.

The protein belongs to the MobA family. Requires Mg(2+) as cofactor.

The protein localises to the cytoplasm. It carries out the reaction Mo-molybdopterin + GTP + H(+) = Mo-molybdopterin guanine dinucleotide + diphosphate. Functionally, transfers a GMP moiety from GTP to Mo-molybdopterin (Mo-MPT) cofactor (Moco or molybdenum cofactor) to form Mo-molybdopterin guanine dinucleotide (Mo-MGD) cofactor. The protein is Probable molybdenum cofactor guanylyltransferase of Flavobacterium johnsoniae (strain ATCC 17061 / DSM 2064 / JCM 8514 / BCRC 14874 / CCUG 350202 / NBRC 14942 / NCIMB 11054 / UW101) (Cytophaga johnsonae).